An 87-amino-acid chain; its full sequence is Antitoxin YefM (87 aa).

Belongs to the phD/YefM antitoxin family. As to quaternary structure, forms a complex with YoeB which inhibits its toxin activity.

Functionally, antitoxin component of a type II toxin-antitoxin (TA) system. A probable antitoxin for the putative mRNA interferase YeoB. The chain is Antitoxin YefM from Streptomyces coelicolor (strain ATCC BAA-471 / A3(2) / M145).